We begin with the raw amino-acid sequence, 432 residues long: MAESSKVVHVRNVGHEISENDLLQLFQPFGVITKLVMLRAKNQALLQMQDVSSAVSALQFFTNVQPTIRGRNVYVQFSSHQELTTIEQNIHGREDEPNRILLVTIHHMLYPITVDVLHQVFSPYGFVEKLVTFQKSAGFQALIQYQVQQCAASARTALQGRNIYDGCCQLDIQFSNLEELQVNYNNDRSRDYTNPNLPAEQKGRSSHPCYGDTGVAYPQMANTSAIAAAFGGGLPPGITGTNDRCTVLVSNLNADSIDEDKLFNLFSLYGNIVRIKLLRNKPDHALVQMGDGFQAELAVHFLKGAMLFGKRLEVNFSKHPNITPGTDSHDYVNSNLNRFNRNAAKNYRYCCSPTKMIHLSTLPQDVTEEEVMNHVQEHGAVVNTKVFEMNGKKQALVQFENEEEAAEALVCKHATSLGGSIIRISFSQLQTI.

RRM domains lie at K6–H80, N98–D187, C245–H319, and K355–L429.

It localises to the nucleus. Functionally, plays a role in pre-mRNA splicing. Binds to the polypyrimidine tract of introns. May promote the binding of U2 snRNP to pre-mRNA. The polypeptide is Polypyrimidine tract-binding protein homolog 3 (Arabidopsis thaliana (Mouse-ear cress)).